A 383-amino-acid chain; its full sequence is DNA dC-&gt;dU-editing enzyme APOBEC-3G (383 aa).

The interval Met-1–Pro-60 is essential for cytoplasmic localization. 2 CMP/dCMP-type deaminase domains span residues Arg-29–Leu-138 and Gly-214–Leu-327. Thr-32 is modified (phosphothreonine; by PKA). Residues His-65, Cys-97, and Cys-100 each coordinate Zn(2+). A necessary for homooligomerization region spans residues Lys-209–Ala-335. The segment at Ser-213–Gln-215 is interaction with DNA. Phosphothreonine; by PKA and CAMK2 is present on Thr-218. Zn(2+) is bound at residue His-257. Glu-259 acts as the Proton donor in catalysis. Residues Cys-287 and Cys-290 each contribute to the Zn(2+) site. The interaction with DNA stretch occupies residues Arg-312–Arg-319.

Belongs to the cytidine and deoxycytidylate deaminase family. As to quaternary structure, homodimer. Homooligomer. Can bind RNA to form ribonucleoprotein complexes of high-molecular-mass (HMM) or low-molecular-mass (LMM). HMM is inactive and heterogeneous in protein composition because of binding nonselectively to cellular RNAs, which in turn are associated with variety of cellular proteins. The LMM form which is enzymatically active has few or no RNAs associated. Its ability to form homooligomer is distinct from its ability to assemble into HMM. Interacts with APOBEC3B, APOBEC3F, MOV10, AGO2, EIF4E, EIF4ENIF1, DCP2 and DDX6 in an RNA-dependent manner. Interacts with AGO1, AGO3 and PKA/PRKACA. Requires Zn(2+) as cofactor.

It is found in the cytoplasm. It localises to the nucleus. The protein localises to the P-body. The enzyme catalyses a 2'-deoxycytidine in single-stranded DNA + H2O + H(+) = a 2'-deoxyuridine in single-stranded DNA + NH4(+). Its function is as follows. DNA deaminase (cytidine deaminase) which acts as an inhibitor of retrovirus replication and retrotransposon mobility. After the penetration of retroviral nucleocapsids into target cells of infection and the initiation of reverse transcription, it can induce the conversion of cytosine to uracil in the minus-sense single-strand viral DNA, leading to G-to-A hypermutations in the subsequent plus-strand viral DNA. The resultant detrimental levels of mutations in the proviral genome, along with a deamination-independent mechanism that works prior to the proviral integration, together exert efficient antiretroviral effects in infected target cells. Selectively targets single-stranded DNA and does not deaminate double-stranded DNA or single- or double-stranded RNA. The protein is DNA dC-&gt;dU-editing enzyme APOBEC-3G (APOBEC3G) of Erythrocebus patas (Red guenon).